The primary structure comprises 353 residues: Photosystem II D2 protein (353 aa).

The residue at position 2 (threonine 2) is an N-acetylthreonine. Threonine 2 is subject to Phosphothreonine. A helical transmembrane segment spans residues 41–61 (CAYFALGGWFTGTTFVTSWYT). Histidine 118 is a binding site for chlorophyll a. A helical transmembrane segment spans residues 125–141 (GFMLRQFELARSVQLRP). 2 residues coordinate pheophytin a: glutamine 130 and asparagine 143. A helical membrane pass occupies residues 153–166 (VFVSVFLIYPLGQS). Histidine 198 provides a ligand contact to chlorophyll a. A helical transmembrane segment spans residues 208 to 228 (AALLCAIHGATVENTLFEDGD). A plastoquinone-binding residues include histidine 215 and phenylalanine 262. Histidine 215 provides a ligand contact to Fe cation. Histidine 269 provides a ligand contact to Fe cation. A helical transmembrane segment spans residues 279 to 295 (GLWMSALGVVGLALNLR).

The protein belongs to the reaction center PufL/M/PsbA/D family. As to quaternary structure, PSII is composed of 1 copy each of membrane proteins PsbA, PsbB, PsbC, PsbD, PsbE, PsbF, PsbH, PsbI, PsbJ, PsbK, PsbL, PsbM, PsbT, PsbX, PsbY, PsbZ, Psb30/Ycf12, at least 3 peripheral proteins of the oxygen-evolving complex and a large number of cofactors. It forms dimeric complexes. The D1/D2 heterodimer binds P680, chlorophylls that are the primary electron donor of PSII, and subsequent electron acceptors. It shares a non-heme iron and each subunit binds pheophytin, quinone, additional chlorophylls, carotenoids and lipids. There is also a Cl(-1) ion associated with D1 and D2, which is required for oxygen evolution. The PSII complex binds additional chlorophylls, carotenoids and specific lipids. is required as a cofactor.

The protein localises to the plastid. The protein resides in the chloroplast thylakoid membrane. It carries out the reaction 2 a plastoquinone + 4 hnu + 2 H2O = 2 a plastoquinol + O2. Functionally, photosystem II (PSII) is a light-driven water:plastoquinone oxidoreductase that uses light energy to abstract electrons from H(2)O, generating O(2) and a proton gradient subsequently used for ATP formation. It consists of a core antenna complex that captures photons, and an electron transfer chain that converts photonic excitation into a charge separation. The D1/D2 (PsbA/PsbD) reaction center heterodimer binds P680, the primary electron donor of PSII as well as several subsequent electron acceptors. D2 is needed for assembly of a stable PSII complex. The protein is Photosystem II D2 protein of Populus deltoides (Eastern poplar).